Here is a 103-residue protein sequence, read N- to C-terminus: Histone H4, major (103 aa).

Positions Met-1–Lys-12 are enriched in gly residues. The disordered stretch occupies residues Met-1–Gly-29. 4 positions are modified to N6-acetyllysine: Lys-5, Lys-8, Lys-12, and Lys-16. The segment covering Gly-14 to Asn-23 has biased composition (basic residues). The DNA-binding element occupies Lys-16–Arg-21.

Belongs to the histone H4 family. In terms of assembly, the nucleosome is a histone octamer containing two molecules each of H2A, H2B, H3 and H4 assembled in one H3-H4 heterotetramer and two H2A-H2B heterodimers. The octamer wraps approximately 147 bp of DNA.

It localises to the nucleus. Its subcellular location is the chromosome. Core component of nucleosome. Nucleosomes wrap and compact DNA into chromatin, limiting DNA accessibility to the cellular machineries which require DNA as a template. Histones thereby play a central role in transcription regulation, DNA repair, DNA replication and chromosomal stability. DNA accessibility is regulated via a complex set of post-translational modifications of histones, also called histone code, and nucleosome remodeling. In Tetrahymena pyriformis, this protein is Histone H4, major.